The primary structure comprises 305 residues: 2-aminophenol 1,6-dioxygenase beta subunit (305 aa).

H14, H63, and H196 together coordinate Fe cation.

The protein belongs to the LigB/MhpB extradiol dioxygenase family. Heterotetramer of 2 alpha and 2 beta subunits. The cofactor is Fe(2+).

It carries out the reaction 2-aminophenol + O2 = 2-aminomuconate 6-semialdehyde. With respect to regulation, strongly inhibited by CuSO(4), FeCl(3), K(3)[Fe(CN)(6)], AgNO3, HgCl(2) and MnCl(2). Its function is as follows. Component of the 2-aminophenol 1,6-dioxygenase complex that catalyzes the ring fission of 2-aminophenol to produce 2-aminomuconic 6-semialdehyde. AmnB seems to be the catalytic subunit of the complex. The enzyme is also active toward 2-amino-p-cresol, 6-amino-m-cresol, 2-amino-m-cresol, 2-amino-4,5-dimethylphenol, 2-amino-4-chlorophenol, and catechol. The polypeptide is 2-aminophenol 1,6-dioxygenase beta subunit (amnB) (Pseudomonas sp).